Reading from the N-terminus, the 207-residue chain is Succinyl-CoA:3-ketoacid coenzyme A transferase subunit B (207 aa).

E43 is an active-site residue.

This sequence belongs to the 3-oxoacid CoA-transferase subunit B family. In terms of assembly, heterodimer of a subunit A and a subunit B.

The catalysed reaction is a 3-oxo acid + succinyl-CoA = a 3-oxoacyl-CoA + succinate. The protein is Succinyl-CoA:3-ketoacid coenzyme A transferase subunit B (scoB) of Helicobacter pylori (strain J99 / ATCC 700824) (Campylobacter pylori J99).